Here is a 349-residue protein sequence, read N- to C-terminus: Inositol-tetrakisphosphate 1-kinase 2 (349 aa).

1D-myo-inositol 1,3,4-trisphosphate contacts are provided by Lys48 and Lys90. ATP contacts are provided by Arg125 and Lys175. Residues His186 and Lys218 each coordinate 1D-myo-inositol 1,3,4-trisphosphate. ATP-binding positions include 207–218 (QEFVNHGGILFK) and Ser233. 3 residues coordinate Mg(2+): Asp298, Asp313, and Asn315. Residue Asn315 coordinates 1D-myo-inositol 1,3,4-trisphosphate.

The protein belongs to the ITPK1 family. As to quaternary structure, monomer. It depends on Mg(2+) as a cofactor.

It catalyses the reaction 1D-myo-inositol 3,4,5,6-tetrakisphosphate + ATP = 1D-myo-inositol 1,3,4,5,6-pentakisphosphate + ADP + H(+). The enzyme catalyses 1D-myo-inositol 1,3,4-trisphosphate + ATP = 1D-myo-inositol 1,3,4,5-tetrakisphosphate + ADP + H(+). The catalysed reaction is 1D-myo-inositol 1,3,4-trisphosphate + ATP = 1D-myo-inositol 1,3,4,6-tetrakisphosphate + ADP + H(+). Its function is as follows. Kinase that can phosphorylate various inositol polyphosphate such as Ins(3,4,5,6)P4 or Ins(1,3,4)P3 and participates in phytic acid biosynthesis in developing seeds. Phytic acid is the primary storage form of phosphorus in cereal grains and other plant seeds. The polypeptide is Inositol-tetrakisphosphate 1-kinase 2 (ITPK2) (Oryza sativa subsp. indica (Rice)).